Consider the following 357-residue polypeptide: Guanine nucleotide-binding protein alpha-16 subunit (357 aa).

Residue G2 is the site of N-myristoyl glycine attachment. C3 carries S-palmitoyl cysteine lipidation. One can recognise a G-alpha domain in the interval 32–357; the sequence is RTIKLLLLGA…RDNLRTCGLY (326 aa). The G1 motif stretch occupies residues 35–48; the sequence is KLLLLGAGESGKST. GTP-binding positions include 40 to 47, 175 to 181, 200 to 204, 269 to 272, and A329; these read GAGESGKS, LRTRIKT, DVGGQ, and NKKD. Mg(2+) is bound by residues S47 and T181. The interval 173–181 is G2 motif; the sequence is DILRTRIKT. The G3 motif stretch occupies residues 196 to 205; sequence FLVFDVGGQR. Residues 265–272 form a G4 motif region; sequence ILFLNKKD. The interval 327–332 is G5 motif; sequence TCATDT.

It belongs to the G-alpha family. G proteins are composed of 3 units; alpha, beta and gamma. The alpha chain contains the guanine nucleotide binding site.

Guanine nucleotide-binding proteins (G proteins) are involved as modulators or transducers in various transmembrane signaling systems. In the 1-cell embryo, probably together with goa-1, controls nuclear rotation and spindle elongation during mitosis. During the first embryonic cell divisons, plays a role in gpr-1/2 cortical localization and in the proper orientation of EMS blastomere mitotic spindle. This is Guanine nucleotide-binding protein alpha-16 subunit (gpa-16) from Caenorhabditis elegans.